Here is a 482-residue protein sequence, read N- to C-terminus: Malvidin galactosylase UGT88C3 (482 aa).

The active-site Proton acceptor is His-16. The active-site Charge relay is the Asp-117. UDP contacts are provided by Ser-279, Trp-345, Ala-349, His-366, Asn-370, Ser-371, and Glu-374.

This sequence belongs to the UDP-glycosyltransferase family. Highly expressed in leaves, sheaths, pistils and embryos, observed in stems, stem nodes and panicles, and present at low levels in roots.

It localises to the endoplasmic reticulum. It is found in the nucleus. It carries out the reaction malvidin + UDP-alpha-D-galactose = malvidin 3-O-beta-D-galactoside + UDP + H(+). It functions in the pathway pigment biosynthesis; anthocyanin biosynthesis. Functionally, UDP-glycosyltransferase which uses UDP-galactose and malvidin as substrates to catalyze the biosynthesis of malvidin 3-O-galactoside, an anthocyanin conferring purple pigmentation. This is Malvidin galactosylase UGT88C3 from Oryza sativa subsp. japonica (Rice).